We begin with the raw amino-acid sequence, 146 residues long: Putative pre-16S rRNA nuclease (146 aa).

This sequence belongs to the YqgF nuclease family.

It is found in the cytoplasm. Could be a nuclease involved in processing of the 5'-end of pre-16S rRNA. The chain is Putative pre-16S rRNA nuclease from Burkholderia mallei (strain SAVP1).